The primary structure comprises 166 residues: 3-isopropylmalate dehydratase small subunit (166 aa).

Belongs to the LeuD family. LeuD type 2 subfamily. As to quaternary structure, heterodimer of LeuC and LeuD.

It catalyses the reaction (2R,3S)-3-isopropylmalate = (2S)-2-isopropylmalate. The protein operates within amino-acid biosynthesis; L-leucine biosynthesis; L-leucine from 3-methyl-2-oxobutanoate: step 2/4. Its function is as follows. Catalyzes the isomerization between 2-isopropylmalate and 3-isopropylmalate, via the formation of 2-isopropylmaleate. This Aliarcobacter butzleri (strain RM4018) (Arcobacter butzleri) protein is 3-isopropylmalate dehydratase small subunit.